We begin with the raw amino-acid sequence, 221 residues long: Iron-sulfur cluster repair protein YtfE (221 aa).

This sequence belongs to the RIC family. YtfE subfamily. In terms of assembly, homodimer.

Its subcellular location is the cytoplasm. Its function is as follows. Di-iron-containing protein involved in the repair of iron-sulfur clusters damaged by oxidative and nitrosative stress conditions. The sequence is that of Iron-sulfur cluster repair protein YtfE from Yersinia pestis bv. Antiqua (strain Antiqua).